The sequence spans 277 residues: Inositol monophosphatase 1 (277 aa).

The Mg(2+) site is built by glutamate 70, aspartate 90, isoleucine 92, and aspartate 93. Glutamate 70 provides a ligand contact to substrate. 92-95 (IDGT) serves as a coordination point for substrate. Threonine 168 is modified (phosphothreonine). Substrate-binding positions include 194-196 (GTA), glutamate 213, and aspartate 220. Mg(2+) is bound at residue aspartate 220.

This sequence belongs to the inositol monophosphatase superfamily. In terms of assembly, homodimer. Requires Mg(2+) as cofactor.

The protein localises to the cytoplasm. The catalysed reaction is a myo-inositol phosphate + H2O = myo-inositol + phosphate. It catalyses the reaction 1D-myo-inositol 1-phosphate + H2O = myo-inositol + phosphate. The enzyme catalyses 1D-myo-inositol 2-phosphate + H2O = myo-inositol + phosphate. It carries out the reaction 1D-myo-inositol 3-phosphate + H2O = myo-inositol + phosphate. The catalysed reaction is 1D-myo-inositol 4-phosphate + H2O = myo-inositol + phosphate. It catalyses the reaction 1D-myo-inositol 5-phosphate + H2O = myo-inositol + phosphate. The enzyme catalyses 1D-myo-inositol 6-phosphate + H2O = myo-inositol + phosphate. It carries out the reaction scyllo-inositol 1-phosphate + H2O = scyllo-inositol + phosphate. The catalysed reaction is alpha-D-galactose 1-phosphate + H2O = D-galactose + phosphate. It catalyses the reaction alpha-D-glucose 1-phosphate + H2O = D-glucose + phosphate. The enzyme catalyses D-glucose 6-phosphate + H2O = D-glucose + phosphate. It carries out the reaction beta-D-fructose 1-phosphate + H2O = D-fructose + phosphate. The catalysed reaction is glycerol 2-phosphate + H2O = glycerol + phosphate. It catalyses the reaction adenosine 2'-phosphate + H2O = adenosine + phosphate. It functions in the pathway polyol metabolism; myo-inositol biosynthesis; myo-inositol from D-glucose 6-phosphate: step 2/2. Its activity is regulated as follows. Inhibited by Li(+), Ca(2+) and Mn(2+), but also by Mg(2+) at concentrations above 3 mM. Functionally, phosphatase involved in the dephosphorylation of myo-inositol monophosphate to generate myo-inositol. Is also able to dephosphorylate scyllo-inositol-phosphate, myo-inositol 1,4-diphosphate, scyllo-inositol-1,3-diphosphate and scyllo-inositol-1,4-diphosphate. Also dephosphorylates in vitro other sugar-phosphates including D-galactose-1-phosphate, glucose-1-phosphate, glucose-6-phosphate, fructose-1-phosphate, beta-glycerophosphate and 2'-AMP. Responsible for the provision of inositol required for synthesis of phosphatidylinositol and polyphosphoinositides, and involved in maintaining normal brain function. Has been implicated as the pharmacological target for lithium Li(+) action in brain. The sequence is that of Inositol monophosphatase 1 (IMPA1) from Sus scrofa (Pig).